Consider the following 383-residue polypeptide: Na(+)/H(+) antiporter NhaA (383 aa).

Helical transmembrane passes span 14-34, 47-67, 87-107, 117-137, 146-166, 171-191, 205-225, 252-272, 280-300, 321-341, and 356-376; these read AGGI…NSPL, FGMS…FLLI, IFPA…YVAF, GWAI…ALLG, VFLL…IALF, LSTM…MLNA, AILW…GVVI, VAFG…LEGV, MLPL…IFTF, IFAV…ISSL, and LGIL…LHFS.

The protein belongs to the NhaA Na(+)/H(+) (TC 2.A.33) antiporter family.

The protein localises to the cell inner membrane. The enzyme catalyses Na(+)(in) + 2 H(+)(out) = Na(+)(out) + 2 H(+)(in). Functionally, na(+)/H(+) antiporter that extrudes sodium in exchange for external protons. The polypeptide is Na(+)/H(+) antiporter NhaA (Vibrio alginolyticus).